Reading from the N-terminus, the 439-residue chain is uncharacterized protein (439 aa).

28-35 (GRRRIGKT) contributes to the ATP binding site.

This is an uncharacterized protein from Methanocaldococcus jannaschii (strain ATCC 43067 / DSM 2661 / JAL-1 / JCM 10045 / NBRC 100440) (Methanococcus jannaschii).